The sequence spans 904 residues: uncharacterized protein (904 aa).

2 disordered regions span residues 247–275 (KIGK…SLEF) and 328–360 (GDSQ…HHFS). Residues 342–360 (GAQTLSPTSHPSSANHHFS) show a composition bias toward polar residues. A helical transmembrane segment spans residues 778 to 798 (VVQGMILMFAGGKLIFGGRVL).

Its subcellular location is the membrane. This is an uncharacterized protein from Homo sapiens (Human).